The chain runs to 340 residues: Lipoate--protein ligase 2 (340 aa).

In terms of domain architecture, BPL/LPL catalytic spans 31-222 (FLDEDILFPY…QILGIDDIKE (192 aa)). Residues R73, 78 to 81 (GAVY), K136, and A140 each bind ATP. K136 is a binding site for (R)-lipoate. A coiled-coil region spans residues 293–321 (QGDIKDVEEALQGTKMTREDLMHQLKQLD).

Belongs to the LplA family.

The catalysed reaction is L-lysyl-[lipoyl-carrier protein] + (R)-lipoate + ATP = N(6)-[(R)-lipoyl]-L-lysyl-[lipoyl-carrier protein] + AMP + diphosphate + H(+). The protein operates within protein modification; protein lipoylation via exogenous pathway; protein N(6)-(lipoyl)lysine from lipoate: step 1/2. It functions in the pathway protein modification; protein lipoylation via exogenous pathway; protein N(6)-(lipoyl)lysine from lipoate: step 2/2. In terms of biological role, catalyzes specifically the lipoylation of GcvH-L (SAV0324), likely via the ATP-dependent activation of lipoate to lipoyl-AMP and the transfer of the activated lipoyl onto the lipoyl domain of the target protein. Can also utilize lipoamide as substrate for GcvH-L modification. This Staphylococcus aureus (strain Mu50 / ATCC 700699) protein is Lipoate--protein ligase 2.